We begin with the raw amino-acid sequence, 402 residues long: Septin CDC11 (402 aa).

Met1 carries the post-translational modification N-acetylmethionine. At Ser4 the chain carries Phosphoserine. The Basic motif signature appears at 14–21 (RKRKTLKK). In terms of domain architecture, Septin-type G spans 21–307 (KSINFSIMII…ENYRTEALSG (287 aa)). The interval 31-38 (GESGSGRS) is G1 motif. 31 to 38 (GESGSGRS) contributes to the GTP binding site. The G3 motif stretch occupies residues 89–92 (DTPN). The interval 171-174 (SKAD) is G4 motif. GTP contacts are provided by residues 172–180 (KADSLTPKE) and Gly233. Residues 318–376 (AKQEISESDYLMKEEQIKLEEERLRKFEERVHQDLINKRKELLERENELKEIEKRLLAE) adopt a coiled-coil conformation. Ser394 is subject to Phosphoserine; by CDC28. Residue Ser395 is modified to Phosphoserine; by GIN4.

It belongs to the TRAFAC class TrmE-Era-EngA-EngB-Septin-like GTPase superfamily. Septin GTPase family. Component of the septin complex which consists of CDC3, CDC10, CDC11, CDC12 and probably SEP7. The purified septin complex appeared to have a stoichiometry of 2 CDC3, 1 to 2 CDC10, 1 CDC11, 2 CDC12, and 1 or none SEP7 subunit. Interacts with HSL1. Hyphal induction causes immediate phosphorylation at Ser-395 by GIN4 and at Ser-394 by CDC28-CCN1. GIN4 phosphorylation at Ser-395 primes CDC11 for further phosphorylation by CDC28-CCN1. CDC28-HGC1 then maintains CDC11 phosphorylation throughout hyphal growth. Ser-4 is also phosphorylated in yeast cells but not hyphal cells. Post-translationally, met-1 is acetylated.

The protein resides in the bud neck. Septins are GTPases involved in cytokinesis that assemble early in the cell cycle as a patch at the incipient bud site and form a ring before bud emergence, which transforms into an hour-glass shaped collar of cortical filaments that spans both sides of the mother-bud neck. This collar persists until just before cytokinesis, when it splits into two rings that occupy opposite sides of the neck. The septins at the bud neck serve as a structural scaffold that recruits different components involved in diverse processes at specific stages during the cell cycle. Many proteins bind asymmetrically to the septin collar. The septin assembly is regulated by protein kinase GIN4. Septins are also involved in cell morphogenesis, chlamydospores morphogenesis, bud site selection, chitin deposition, cell cycle regulation, cell compartmentalization, and spore wall formation. CDC11 is required for the correct localization of SEC3 at bud tips and bud necks. Plays a key role in invasive growth and virulence. This chain is Septin CDC11 (CDC11), found in Candida albicans (strain SC5314 / ATCC MYA-2876) (Yeast).